A 435-amino-acid chain; its full sequence is Putative magnesium transporter MRS2-H (435 aa).

A disordered region spans residues Phe19–Ser54. Transmembrane regions (helical) follow at residues Leu369 to Ala389 and Phe408 to Trp428.

The protein belongs to the CorA metal ion transporter (MIT) (TC 1.A.35.5) family.

Its subcellular location is the membrane. Its function is as follows. Putative magnesium transporter. This Oryza sativa subsp. indica (Rice) protein is Putative magnesium transporter MRS2-H (MRS2-H).